The sequence spans 101 residues: Small ribosomal subunit protein uS14 (101 aa).

The tract at residues 1–22 (MAKVSSIKKNESRKKKSQSLHN) is disordered. Over residues 11–22 (ESRKKKSQSLHN) the composition is skewed to basic residues.

Belongs to the universal ribosomal protein uS14 family. Part of the 30S ribosomal subunit. Contacts proteins S3 and S10.

Binds 16S rRNA, required for the assembly of 30S particles and may also be responsible for determining the conformation of the 16S rRNA at the A site. This Rickettsia conorii (strain ATCC VR-613 / Malish 7) protein is Small ribosomal subunit protein uS14.